The primary structure comprises 75 residues: Acyl carrier protein (75 aa).

The 74-residue stretch at 1-74 (MLDKVKEIIV…DVINYIEANK (74 aa)) folds into the Carrier domain. At S34 the chain carries O-(pantetheine 4'-phosphoryl)serine.

This sequence belongs to the acyl carrier protein (ACP) family. 4'-phosphopantetheine is transferred from CoA to a specific serine of apo-ACP by AcpS. This modification is essential for activity because fatty acids are bound in thioester linkage to the sulfhydryl of the prosthetic group.

The protein localises to the cytoplasm. It functions in the pathway lipid metabolism; fatty acid biosynthesis. Its function is as follows. Carrier of the growing fatty acid chain in fatty acid biosynthesis. The chain is Acyl carrier protein from Fusobacterium nucleatum subsp. nucleatum (strain ATCC 25586 / DSM 15643 / BCRC 10681 / CIP 101130 / JCM 8532 / KCTC 2640 / LMG 13131 / VPI 4355).